A 1166-amino-acid polypeptide reads, in one-letter code: MKTNAKFDRKEISKIYKNIARHHIDSFDFAMSTCLNRACEHMLPFDYIVPEESASCGFKKLTLWYDSFELGQPSLGEIDYDSHILYPSECRQRKMTYTIPLFATIFKKFDDEMVDNFKVKLGDIPTMGRKKFCNLKGLTKKELAKRGEDMLEFGGYFIVNGNEKVIRMLIVPKRNFPIAFKRSKFLERGKDFTDYGVQMRCVRDDFTAQTITLTYLSDGSVSLRLIYQKQEFLIPIILILKALKNCTDRQIYERIVKGNFNQRQISDRVEAILAVGKDLNIYDSDQSKALIGSRFRIVLAGITSETSDIDAGDLFLSKHICIHTDSYEAKFDTLILMIDKLYASVANEVELDNLDSVAMQDVLLGGHLYLQILSEKLFDCLHINLRARLNKELKRHNFDPMKFRDVLTNQKINCGIGLIGKRMENFLATGNLISRTNLDLMQTSGFCIIGDKLNNIRFLSHFRSIHRGQYFAEQKTTSVRKLLPESWGFICPVHTPDGAPCGLLNHISMSCVPIGSEEKQIDIDKFRNILGELGMNSISSDLCLNYHTGYYPVIFDGIHLGYVEKDIGESFVEGLRYLKCTQSQPDYAIPRTLEIAFIPFSGYSRNLQWPGIFLASTPARFTRPVKNLHYNCIEWISPLEQMNLSIACTDEDITPETTHQELDPINILSIVASVGVFAEYNQSPRNMYQCQMAKQTMGTPYHNHQFRTDNKIYRLLFPHRPIVKTRTQVDFDIEEYPSGTNAVVAVISYTGYDLEDAMIINKSSYERGFGHGVVYKSYTHDLNESNSQSTRGIKSSVRYKFLNNVSQKDKSKIKLENIDPDGLPKIGSQLTKGKPELCIFDTLKRGAKLSKFKDSEKARIETVRVCGNDDKNPDNLSIGYTIRYSRIPVIGDKFSSRHGQKGVLSVLWPQVDMPFTENGITPDLIINPHAFPSRMTMGMLIQSMAAKSGSLRGEFKTVETFQRYDDNDIVGHFGKELLDKGFNYHGNELMYSGIFGTPLKADIFIGVVYYQRLRHMVSDKSQARGTGPIDILTHQPVKGRKKGGGIRFGEMERDSLLAHGAAYCLNDRLFRSSDYSEGFVCQNCGSILSCYVNRAIMKTQTFIPPSLDESNKDTEDKEIHMNEKVICKVCKKNSNCKKVALPFVLRFLANELASMGIKLKFTVNDF.

The C4-type zinc-finger motif lies at 1081 to 1130; the sequence is CQNCGSILSCYVNRAIMKTQTFIPPSLDESNKDTEDKEIHMNEKVICKVC.

This sequence belongs to the RNA polymerase beta chain family. Component of the RNA polymerase I (Pol I) complex consisting of at least 13 subunits.

It is found in the nucleus. The protein localises to the nucleolus. The enzyme catalyses RNA(n) + a ribonucleoside 5'-triphosphate = RNA(n+1) + diphosphate. Its function is as follows. DNA-dependent RNA polymerase catalyzes the transcription of DNA into RNA using the four ribonucleoside triphosphates as substrates. Second largest core component of RNA polymerase I which synthesizes ribosomal RNA precursors. Proposed to contribute to the polymerase catalytic activity and forms the polymerase active center together with the largest subunit. Pol I is composed of mobile elements and RPA2 is part of the core element with the central large cleft and probably a clamp element that moves to open and close the cleft. The protein is DNA-directed RNA polymerase I subunit RPA2 (RPA2) of Euplotoides octocarinatus (Freshwater ciliate).